The following is a 670-amino-acid chain: DNA ligase (670 aa).

Residues 32–36 (DSEYD), 81–82 (SL), and E114 contribute to the NAD(+) site. K116 (N6-AMP-lysine intermediate) is an active-site residue. 4 residues coordinate NAD(+): R137, E174, K291, and K315. 4 residues coordinate Zn(2+): C409, C412, C427, and C433. One can recognise a BRCT domain in the interval 592–670 (ASENLFKDKT…EEEFLAQITR (79 aa)).

This sequence belongs to the NAD-dependent DNA ligase family. LigA subfamily. Mg(2+) serves as cofactor. Mn(2+) is required as a cofactor.

It carries out the reaction NAD(+) + (deoxyribonucleotide)n-3'-hydroxyl + 5'-phospho-(deoxyribonucleotide)m = (deoxyribonucleotide)n+m + AMP + beta-nicotinamide D-nucleotide.. DNA ligase that catalyzes the formation of phosphodiester linkages between 5'-phosphoryl and 3'-hydroxyl groups in double-stranded DNA using NAD as a coenzyme and as the energy source for the reaction. It is essential for DNA replication and repair of damaged DNA. This Haemophilus influenzae (strain 86-028NP) protein is DNA ligase.